The primary structure comprises 361 residues: Protein TIFY 8 (361 aa).

Disordered stretches follow at residues 53–78 (NKAA…GLSS), 113–134 (RFSG…HPET), 190–232 (QTAA…RKDL), and 268–361 (SGGS…KEAT). A compositionally biased stretch (low complexity) spans 56–78 (AKAAMTPSTASASSAGGLGGLSS). 2 stretches are compositionally biased toward polar residues: residues 113 to 127 (RFSG…SHFT) and 208 to 232 (SSFT…RKDL). The region spanning 232 to 267 (LASSTKQMTIFYGGQAHVFDDVHPNKADVIMALAGS) is the Tify domain. Basic and acidic residues predominate over residues 333-361 (GREHQGSIISRGRDIRDPVHRSDPEKEAT).

The protein belongs to the TIFY/JAZ family. In terms of assembly, interacts with AFPH2/NINJA. In terms of processing, ubiquitinated. Targeted for degradation by the SCF(COI1) E3 ubiquitin ligase-proteasome pathway during jasmonate signaling.

The protein localises to the nucleus. Repressor of jasmonate responses. This Arabidopsis thaliana (Mouse-ear cress) protein is Protein TIFY 8.